A 302-amino-acid chain; its full sequence is MALLITPAGVATVNRHSTIPSDTHTSREKPRFHKPCRNDLESLLSEGRLDTSVQTPCPQHPHTQLSCEPQPLEHSSCLSTCLAGCFLPVPSSPHTHPLLPGSRWLPPPLALLMGTLSPGLAVKPSWVPRFPLLARQSPATSVGMPLSAATQPGSVGRLHFPKLRSSSPFSGHSDENKATGQGRENRDQPQRPSHLCECPEAAKQSATNGVAETNRSVFPLGSEARSLSLRRQESQPHSGSSRRESVSCSPSFWCCWQPLAFLTCGCAAPISVPGVTRPSPRPCCVSPPLVRLQSLGLGPTQI.

Disordered stretches follow at residues 15-34, 143-195, and 221-246; these read RHST…RFHK, GMPL…PSHL, and GSEA…RESV. Residues 172–189 show a composition bias toward basic and acidic residues; that stretch reads HSDENKATGQGRENRDQP.

This is an uncharacterized protein from Homo sapiens (Human).